We begin with the raw amino-acid sequence, 199 residues long: Glycerol-3-phosphate acyltransferase (199 aa).

The next 5 helical transmembrane spans lie at 3–23 (AAVW…GVLV), 50–70 (WGPA…AVLV), 78–98 (DWML…SVFL), 113–133 (LLFL…SVIL), and 154–174 (LALG…LLIF).

It belongs to the PlsY family. In terms of assembly, probably interacts with PlsX.

Its subcellular location is the cell inner membrane. It catalyses the reaction an acyl phosphate + sn-glycerol 3-phosphate = a 1-acyl-sn-glycero-3-phosphate + phosphate. Its pathway is lipid metabolism; phospholipid metabolism. In terms of biological role, catalyzes the transfer of an acyl group from acyl-phosphate (acyl-PO(4)) to glycerol-3-phosphate (G3P) to form lysophosphatidic acid (LPA). This enzyme utilizes acyl-phosphate as fatty acyl donor, but not acyl-CoA or acyl-ACP. In Thermus thermophilus (strain ATCC 27634 / DSM 579 / HB8), this protein is Glycerol-3-phosphate acyltransferase.